Consider the following 261-residue polypeptide: Matrix metalloproteinase-26 (261 aa).

The signal sequence occupies residues 1–17; that stretch reads MQLVILRVTIFLPWCFA. Residues 18–89 constitute a propeptide that is removed on maturation; that stretch reads VPVPPAADHK…PHCGVPDGSD (72 aa). Asparagine 64 is a glycosylation site (N-linked (GlcNAc...) asparagine). The Cysteine switch signature appears at 80-87; that stretch reads PHCGVPDG. Residues cysteine 82 and histidine 208 each coordinate Zn(2+). The active site involves glutamate 209. Zn(2+) contacts are provided by histidine 212 and histidine 218. Asparagine 221 carries N-linked (GlcNAc...) asparagine glycosylation.

Belongs to the peptidase M10A family. Zn(2+) serves as cofactor. It depends on Ca(2+) as a cofactor. Expressed specifically in uterus and placenta. Is also widely expressed in malignant tumors from different sources as well as in diverse tumor cell lines.

The protein resides in the secreted. It localises to the extracellular space. The protein localises to the extracellular matrix. Functionally, may hydrolyze collagen type IV, fibronectin, fibrinogen, beta-casein, type I gelatin and alpha-1 proteinase inhibitor. Is also able to activate progelatinase B. The chain is Matrix metalloproteinase-26 (MMP26) from Homo sapiens (Human).